The sequence spans 429 residues: Histidinol dehydrogenase (429 aa).

NAD(+)-binding residues include Y130, Q191, and N214. Residues S237, Q259, and H262 each coordinate substrate. Positions 259 and 262 each coordinate Zn(2+). Residues E327 and H328 each act as proton acceptor in the active site. Substrate contacts are provided by H328, D361, E415, and H420. Position 361 (D361) interacts with Zn(2+). Residue H420 coordinates Zn(2+).

This sequence belongs to the histidinol dehydrogenase family. Zn(2+) serves as cofactor.

It catalyses the reaction L-histidinol + 2 NAD(+) + H2O = L-histidine + 2 NADH + 3 H(+). It functions in the pathway amino-acid biosynthesis; L-histidine biosynthesis; L-histidine from 5-phospho-alpha-D-ribose 1-diphosphate: step 9/9. Functionally, catalyzes the sequential NAD-dependent oxidations of L-histidinol to L-histidinaldehyde and then to L-histidine. The sequence is that of Histidinol dehydrogenase from Nitrobacter winogradskyi (strain ATCC 25391 / DSM 10237 / CIP 104748 / NCIMB 11846 / Nb-255).